We begin with the raw amino-acid sequence, 223 residues long: UPF0441 protein YgiB (223 aa).

The disordered stretch occupies residues 201 to 223; it reads ESVAKQSTMQRSAAGTSTRSMGG. The span at 204-223 shows a compositional bias: polar residues; that stretch reads AKQSTMQRSAAGTSTRSMGG.

It belongs to the UPF0441 family.

In Salmonella gallinarum (strain 287/91 / NCTC 13346), this protein is UPF0441 protein YgiB.